Reading from the N-terminus, the 262-residue chain is 3-methyl-2-oxobutanoate hydroxymethyltransferase (262 aa).

Asp-43 and Asp-82 together coordinate Mg(2+). Residues 43–44 (DS), Asp-82, and Lys-111 contribute to the 3-methyl-2-oxobutanoate site. A Mg(2+)-binding site is contributed by Glu-113. The Proton acceptor role is filled by Glu-180.

This sequence belongs to the PanB family. Homodecamer; pentamer of dimers. Mg(2+) is required as a cofactor.

Its subcellular location is the cytoplasm. The catalysed reaction is 3-methyl-2-oxobutanoate + (6R)-5,10-methylene-5,6,7,8-tetrahydrofolate + H2O = 2-dehydropantoate + (6S)-5,6,7,8-tetrahydrofolate. The protein operates within cofactor biosynthesis; coenzyme A biosynthesis. Its function is as follows. Catalyzes the reversible reaction in which hydroxymethyl group from 5,10-methylenetetrahydrofolate is transferred onto alpha-ketoisovalerate to form ketopantoate. The sequence is that of 3-methyl-2-oxobutanoate hydroxymethyltransferase from Pyrobaculum aerophilum (strain ATCC 51768 / DSM 7523 / JCM 9630 / CIP 104966 / NBRC 100827 / IM2).